A 354-amino-acid chain; its full sequence is Phospho-N-acetylmuramoyl-pentapeptide-transferase (354 aa).

The next 10 helical transmembrane spans lie at 23 to 43 (IAFF…IAWA), 66 to 86 (TPTM…LLCS), 88 to 108 (LTNT…FIGF), 138 to 158 (FALS…FIPF), 161 to 181 (YALF…ITAS), 193 to 213 (GLAS…VYLC), 227 to 247 (VVGV…ILGF), 257 to 277 (VFMG…TGVV), 282 to 302 (ILLI…ILQV), and 331 to 351 (KIIV…LTTL).

This sequence belongs to the glycosyltransferase 4 family. MraY subfamily. Requires Mg(2+) as cofactor.

It is found in the cell inner membrane. It catalyses the reaction UDP-N-acetyl-alpha-D-muramoyl-L-alanyl-gamma-D-glutamyl-meso-2,6-diaminopimeloyl-D-alanyl-D-alanine + di-trans,octa-cis-undecaprenyl phosphate = di-trans,octa-cis-undecaprenyl diphospho-N-acetyl-alpha-D-muramoyl-L-alanyl-D-glutamyl-meso-2,6-diaminopimeloyl-D-alanyl-D-alanine + UMP. The protein operates within cell wall biogenesis; peptidoglycan biosynthesis. Functionally, catalyzes the initial step of the lipid cycle reactions in the biosynthesis of the cell wall peptidoglycan: transfers peptidoglycan precursor phospho-MurNAc-pentapeptide from UDP-MurNAc-pentapeptide onto the lipid carrier undecaprenyl phosphate, yielding undecaprenyl-pyrophosphoryl-MurNAc-pentapeptide, known as lipid I. The sequence is that of Phospho-N-acetylmuramoyl-pentapeptide-transferase from Campylobacter hominis (strain ATCC BAA-381 / DSM 21671 / CCUG 45161 / LMG 19568 / NCTC 13146 / CH001A).